The following is a 134-amino-acid chain: Small ribosomal subunit protein bS6 (134 aa).

The interval 100-134 is disordered; the sequence is SFLARDETDRRERSEETAEGEGEPDHSANEAVVTA. A compositionally biased stretch (basic and acidic residues) spans 103-115; sequence ARDETDRRERSEE.

It belongs to the bacterial ribosomal protein bS6 family.

Functionally, binds together with bS18 to 16S ribosomal RNA. This Acidithiobacillus ferrooxidans (strain ATCC 23270 / DSM 14882 / CIP 104768 / NCIMB 8455) (Ferrobacillus ferrooxidans (strain ATCC 23270)) protein is Small ribosomal subunit protein bS6.